The primary structure comprises 321 residues: Methionyl-tRNA formyltransferase (321 aa).

112-115 (SILP) serves as a coordination point for (6S)-5,6,7,8-tetrahydrofolate.

This sequence belongs to the Fmt family.

It catalyses the reaction L-methionyl-tRNA(fMet) + (6R)-10-formyltetrahydrofolate = N-formyl-L-methionyl-tRNA(fMet) + (6S)-5,6,7,8-tetrahydrofolate + H(+). Functionally, attaches a formyl group to the free amino group of methionyl-tRNA(fMet). The formyl group appears to play a dual role in the initiator identity of N-formylmethionyl-tRNA by promoting its recognition by IF2 and preventing the misappropriation of this tRNA by the elongation apparatus. The chain is Methionyl-tRNA formyltransferase from Shewanella pealeana (strain ATCC 700345 / ANG-SQ1).